A 423-amino-acid chain; its full sequence is Methanol:N,N-dimethyl-4-nitrosoaniline oxidoreductase (423 aa).

Belongs to the iron-containing alcohol dehydrogenase family. As to quaternary structure, homodecamer. Mg(2+) is required as a cofactor. It depends on Zn(2+) as a cofactor. Requires NADPH as cofactor.

It carries out the reaction methanol + A = formaldehyde + AH2. In terms of biological role, catalyzes the oxidation of methanol to yield formaldehyde. While the in vivo electron acceptor is not known, N,N-dimethyl-4-nitrosoaniline (NDMA) can serve this function in vitro and is reduced to 4-(hydroxylamino)-N,N-dimethylaniline. It is also able to use ethanol and formaldehyde with an activity comparable to methanol, and has a weak activity with methylamine as substrate. This is Methanol:N,N-dimethyl-4-nitrosoaniline oxidoreductase from Mycobacterium sp. (strain DSM 3803 / JC1).